The primary structure comprises 780 residues: LPS-assembly protein LptD (780 aa).

An N-terminal signal peptide occupies residues 1-24 (MKKRFPTLLATLIWTALYSQHTLA).

It belongs to the LptD family. As to quaternary structure, component of the lipopolysaccharide transport and assembly complex. Interacts with LptE and LptA.

The protein resides in the cell outer membrane. Its function is as follows. Together with LptE, is involved in the assembly of lipopolysaccharide (LPS) at the surface of the outer membrane. This Yersinia pestis bv. Antiqua (strain Antiqua) protein is LPS-assembly protein LptD.